We begin with the raw amino-acid sequence, 466 residues long: Rhodanese-like domain-containing protein 4, chloroplastic (466 aa).

Residues 1–15 (MEALKTATFSPMSVL) constitute a chloroplast transit peptide. The tract at residues 1 to 35 (MEALKTATFSPMSVLSEKRSEPRKPFSLPNLFPPK) is disordered. The N-terminal 54 residues, 16–69 (SEKRSEPRKPFSLPNLFPPKSQRPISQESFLKRFNGGLALLTSVLSSATAPAKS), are a transit peptide targeting the thylakoid. A helical transmembrane segment spans residues 103–123 (PLVIAGGVAALAVPFVLSQVL). Residues 144-250 (TDDNAQLLDI…WLNSSLPWIE (107 aa)) form the Rhodanese domain. Residues 277–297 (VSVALGVAAAAGLSVFAFTEI) form a helical membrane-spanning segment. Low complexity predominate over residues 373–384 (EAESATATTTTV). 2 disordered regions span residues 373–392 (EAES…PEPE) and 426–466 (AQVI…PSQP). Positions 455 to 466 (LKPPSSPMPSQP) are enriched in pro residues.

Component of high molecular weight thylakoid LFNRs-containing protein complexes containing LIR1, LFNR1, LFNR2, TIC62 and TROL proteins. Expressed in leaves and stems, and at lower levels in flowers and siliques (at protein level).

It localises to the plastid. It is found in the chloroplast envelope. The protein resides in the chloroplast thylakoid membrane. Its function is as follows. Rhodanese domain-containing protein required for anchoring ferredoxin--NADP reductase to the thylakoid membranes and sustaining efficient linear electron flow (LEF). The protein is Rhodanese-like domain-containing protein 4, chloroplastic of Arabidopsis thaliana (Mouse-ear cress).